The sequence spans 20 residues: DELTA-actitoxin-Afr1b (20 aa).

This sequence belongs to the actinoporin family. Sea anemone subfamily. Octamer or nonamer in membranes. Monomer in the soluble state.

Its subcellular location is the secreted. It localises to the nematocyst. The protein resides in the target cell membrane. Pore-forming toxin (PFT) that consists of a crown-shaped octamer or nonamer that forms cation-selective hydrophilic pores of about 1.5 nm (inside) and 13 nm (outside) and causes cytolysis. It causes cardiac stimulation. Also causes hemolysis (HC(50)=0.4 nM). Interestingly, the Phe-16 is crucial for hemolysis. Pore formation is a multi-step process that involves specific recognition of membrane sphingomyelin (but neither cholesterol nor phosphatidylcholine) using aromatic rich region and adjacent phosphocholine (POC) binding site, firm binding to the membrane (mainly driven by hydrophobic interactions) accompanied by the transfer of the N-terminal region to the lipid-water interface and finally pore formation after oligomerization of monomers. It is probable that a dimeric form is an assembly intermediate before the complete oligomerization. The formation of stable pores occurs only in vesicles composed of DOPC/SM (there is no oligomerization when the PFT is treated with vesicles of DOPC or SM alone). The transmembrane pore displays 8 lateral perforations, one at each subunit-subunit interface, partially occupied by the acyl-chain region of a bridging lipid. Each pore contains 24 lipid molecules, firmly bound to each subunit, that is, 3 lipids (L1, L2, L3, L4 and/or L5) are associated to each subunit. Lipid L1 bridges 2 subunits, whereas lipids L2 and L3 bind to sites at single subunit. The polypeptide is DELTA-actitoxin-Afr1b (Actinia fragacea (Strawberry anemone)).